Consider the following 243-residue polypeptide: MSGHSKWSTIKRKKGALDAKRNKIFTKLIREITIAAKIGGGDIESNPRLRVAVSKAKVANMPKDNIEKAIKKGIGGNEGVEYFEITYEAYAPYGVALMIKCLTDNKNRTSSDVKSVLAKGGGSLGTPGSVSYMFYRKGLVVYNLEKYLEDEIMEFALEFGAEDILVSNNEAEVITNPDDFDKVLSLLRTKFKEEMAEIALIPENKISLNKEQAEKIILLIEKLEDFDDVQEVIHNLEIPEELS.

It belongs to the TACO1 family.

Its subcellular location is the cytoplasm. The protein is Probable transcriptional regulatory protein BAPKO_0024/BafPKo_0025 of Borreliella afzelii (strain PKo) (Borrelia afzelii).